The sequence spans 174 residues: Co-chaperone protein HscB homolog (174 aa).

Residues 2–74 form the J domain; sequence NYFELFSLLP…IQRAEHLLAL (73 aa).

This sequence belongs to the HscB family. As to quaternary structure, interacts with HscA and stimulates its ATPase activity.

Functionally, co-chaperone involved in the maturation of iron-sulfur cluster-containing proteins. Seems to help targeting proteins to be folded toward HscA. The protein is Co-chaperone protein HscB homolog of Shewanella pealeana (strain ATCC 700345 / ANG-SQ1).